The chain runs to 304 residues: MNRLAVEIPGLSLKNPIMPASGCFGFGQEYSKYYDLNELGAIMAKAVTPEPRLGNPTPRVAETASGMLNAIGLQNPGLEHVLAHELPFLEQFETPIIANVAGATEDDYVQVCSRIGESKAVKAIELNISCPNVKHGGIAFGTDPEVAHRLTKAVKSVASVPVYVKLSPNVADIISIAQAIEAAGADGLTMINTLLGMRIDLKTRKPVIANGTGGLSGPAIKPVAIRMIHQVRAVSNIPIIGMGGVQTVDDVLEFLIAGADAVAVGTMNFTDPFICPKLITELPKRMDELGISSLQELKKELLNQ.

FMN contacts are provided by residues Ser21 and 45–46; that span reads KA. Residues Lys45 and 69-73 contribute to the substrate site; that span reads NAIGL. FMN is bound by residues Asn99 and Asn127. Residue Asn127 coordinates substrate. Cys130 (nucleophile) is an active-site residue. FMN is bound by residues Lys165 and Ile191. Residue 192–193 coordinates substrate; it reads NT. FMN-binding positions include Gly217, 243-244, and 265-266; these read GG and GT.

The protein belongs to the dihydroorotate dehydrogenase family. Type 1 subfamily. As to quaternary structure, heterotetramer of 2 PyrK and 2 PyrD type B subunits. Requires FMN as cofactor.

The protein resides in the cytoplasm. The enzyme catalyses (S)-dihydroorotate + NAD(+) = orotate + NADH + H(+). It functions in the pathway pyrimidine metabolism; UMP biosynthesis via de novo pathway; orotate from (S)-dihydroorotate (NAD(+) route): step 1/1. In terms of biological role, catalyzes the conversion of dihydroorotate to orotate with NAD(+) as electron acceptor. The chain is Dihydroorotate dehydrogenase B (NAD(+)), catalytic subunit (pyrD) from Listeria innocua serovar 6a (strain ATCC BAA-680 / CLIP 11262).